A 340-amino-acid chain; its full sequence is Serpentine receptor class alpha-18 (340 aa).

A run of 6 helical transmembrane segments spans residues 29 to 49 (FNFI…WLAI), 109 to 129 (VFEL…VFSL), 149 to 169 (FIAT…FYIV), 198 to 218 (VRTG…YVCV), 249 to 269 (ISIV…NLLI), and 285 to 305 (IVSF…VIYF).

Belongs to the nematode receptor-like protein sra family.

The protein resides in the membrane. The chain is Serpentine receptor class alpha-18 (sra-18) from Caenorhabditis elegans.